A 575-amino-acid chain; its full sequence is Beta-amylase 1, chloroplastic (575 aa).

The transit peptide at 1–41 directs the protein to the chloroplast; sequence MALNLSHQLGVLAGTPIKSGEMTDSSLLSISPPSARMMTPK. Phosphoserine is present on residues serine 55 and serine 59. Residues cysteine 73 and cysteine 511 are joined by a disulfide bond. Residues aspartate 147, histidine 187, and aspartate 195 each contribute to the substrate site. Catalysis depends on glutamate 279, which acts as the Proton donor. 3 residues coordinate substrate: lysine 392, histidine 397, and threonine 439. The active-site Proton acceptor is the glutamate 477. Substrate-binding positions include 478-479 and arginine 517; that span reads NA.

It belongs to the glycosyl hydrolase 14 family. As to expression, expressed in leaves, roots, flowers, pollen, and seeds.

It is found in the plastid. The protein localises to the chloroplast. The enzyme catalyses Hydrolysis of (1-&gt;4)-alpha-D-glucosidic linkages in polysaccharides so as to remove successive maltose units from the non-reducing ends of the chains.. Redox regulation; active in reducing conditions, inactive in oxidizing conditions. Thioredoxins f1, m1, and y1 mediate the reversible reductive activation of oxidized BAM1. In terms of biological role, beta-amylase activity. Can use p-nitrophenyl maltopentaoside (PNPG5) as substrate only in reduced form. Can play a minor role in the starch degradation and maltose metabolism in chloroplasts during the night. More active on phosphorylated glucan. Interacts directly with starch or other alpha-1,4-glucan. The sequence is that of Beta-amylase 1, chloroplastic (BAM1) from Arabidopsis thaliana (Mouse-ear cress).